Consider the following 151-residue polypeptide: Nucleoside diphosphate kinase (151 aa).

Residues Lys11, Phe59, Arg87, Thr93, Arg104, and Asn114 each contribute to the ATP site. The active-site Pros-phosphohistidine intermediate is the His117.

Belongs to the NDK family. As to quaternary structure, homotetramer. Requires Mg(2+) as cofactor.

It is found in the cytoplasm. It carries out the reaction a 2'-deoxyribonucleoside 5'-diphosphate + ATP = a 2'-deoxyribonucleoside 5'-triphosphate + ADP. The enzyme catalyses a ribonucleoside 5'-diphosphate + ATP = a ribonucleoside 5'-triphosphate + ADP. Functionally, major role in the synthesis of nucleoside triphosphates other than ATP. The ATP gamma phosphate is transferred to the NDP beta phosphate via a ping-pong mechanism, using a phosphorylated active-site intermediate. In Prochlorococcus marinus (strain NATL1A), this protein is Nucleoside diphosphate kinase.